Here is a 582-residue protein sequence, read N- to C-terminus: Aspartate--tRNA(Asp/Asn) ligase (582 aa).

E177 is a binding site for L-aspartate. An aspartate region spans residues 201 to 204; the sequence is QLFK. R223 is an L-aspartate binding site. ATP contacts are provided by residues 223 to 225 and Q232; that span reads RDE. H447 is a binding site for L-aspartate. E481 is an ATP binding site. R488 lines the L-aspartate pocket. 533-536 contributes to the ATP binding site; the sequence is GLDR.

Belongs to the class-II aminoacyl-tRNA synthetase family. Type 1 subfamily. Homodimer.

Its subcellular location is the cytoplasm. It carries out the reaction tRNA(Asx) + L-aspartate + ATP = L-aspartyl-tRNA(Asx) + AMP + diphosphate. Functionally, aspartyl-tRNA synthetase with relaxed tRNA specificity since it is able to aspartylate not only its cognate tRNA(Asp) but also tRNA(Asn). Reaction proceeds in two steps: L-aspartate is first activated by ATP to form Asp-AMP and then transferred to the acceptor end of tRNA(Asp/Asn). The protein is Aspartate--tRNA(Asp/Asn) ligase of Chlamydia trachomatis serovar L2 (strain ATCC VR-902B / DSM 19102 / 434/Bu).